The following is a 145-amino-acid chain: D-aminoacyl-tRNA deacylase (145 aa).

The Gly-cisPro motif, important for rejection of L-amino acids signature appears at 137 to 138 (GP).

It belongs to the DTD family. In terms of assembly, homodimer.

It is found in the cytoplasm. It catalyses the reaction glycyl-tRNA(Ala) + H2O = tRNA(Ala) + glycine + H(+). It carries out the reaction a D-aminoacyl-tRNA + H2O = a tRNA + a D-alpha-amino acid + H(+). An aminoacyl-tRNA editing enzyme that deacylates mischarged D-aminoacyl-tRNAs. Also deacylates mischarged glycyl-tRNA(Ala), protecting cells against glycine mischarging by AlaRS. Acts via tRNA-based rather than protein-based catalysis; rejects L-amino acids rather than detecting D-amino acids in the active site. By recycling D-aminoacyl-tRNA to D-amino acids and free tRNA molecules, this enzyme counteracts the toxicity associated with the formation of D-aminoacyl-tRNA entities in vivo and helps enforce protein L-homochirality. This chain is D-aminoacyl-tRNA deacylase, found in Photobacterium profundum (strain SS9).